Consider the following 193-residue polypeptide: Xanthine phosphoribosyltransferase (193 aa).

2 residues coordinate xanthine: Leu20 and Asn27. Residue Ala128–Thr132 coordinates 5-phospho-alpha-D-ribose 1-diphosphate. Lys156 provides a ligand contact to xanthine.

Belongs to the purine/pyrimidine phosphoribosyltransferase family. Xpt subfamily. As to quaternary structure, homodimer.

Its subcellular location is the cytoplasm. The catalysed reaction is XMP + diphosphate = xanthine + 5-phospho-alpha-D-ribose 1-diphosphate. It participates in purine metabolism; XMP biosynthesis via salvage pathway; XMP from xanthine: step 1/1. Converts the preformed base xanthine, a product of nucleic acid breakdown, to xanthosine 5'-monophosphate (XMP), so it can be reused for RNA or DNA synthesis. In Deinococcus deserti (strain DSM 17065 / CIP 109153 / LMG 22923 / VCD115), this protein is Xanthine phosphoribosyltransferase.